The primary structure comprises 317 residues: L-lactate dehydrogenase (317 aa).

NAD(+) contacts are provided by Val16, Asp37, and Tyr69. Substrate is bound by residues Gln86, Arg92, and 124–127 (NPVD). Residues 122 to 124 (ASN) and Ser147 contribute to the NAD(+) site. Residue 152 to 155 (DSAR) coordinates substrate. The active-site Proton acceptor is the His179. Tyr223 is modified (phosphotyrosine). Thr232 serves as a coordination point for substrate.

Belongs to the LDH/MDH superfamily. LDH family. In terms of assembly, homotetramer.

It is found in the cytoplasm. The catalysed reaction is (S)-lactate + NAD(+) = pyruvate + NADH + H(+). Its pathway is fermentation; pyruvate fermentation to lactate; (S)-lactate from pyruvate: step 1/1. Catalyzes the conversion of lactate to pyruvate. The chain is L-lactate dehydrogenase from Mycoplasma capricolum subsp. capricolum (strain California kid / ATCC 27343 / NCTC 10154).